A 506-amino-acid chain; its full sequence is MPNEIFTINLNAQAIIPEAFILLGIVGTLLVDLAGEKTASRWAPVICYISLGSSLISLALQWSNPVNSAFLGSFNSDNLAIAFRSIIALSTLISLLISWRYTEQSGSPIGEFAAIVLSATLGAMLLCGSTDLVSVFISLETLSVASYCLSGYLKRDPRSSEAALKYLLVGSAAAAVYLYGSSFLYGLSGSTNLSTIGVEIINKPSFITSLSLVFVLSTVAFKIAAVPFHQWTPDVYEGSPTPVVAFLSVGSKTAGFAFAIRILSTTFSSFDEQWKLLFTILAILSMALGNIVALAQTSMKRMLAYSSIGQAGFVMIGIVSGTQDGLSSAVLYLAAYLFMNLGAFSCVILFSLRTGSDRITDYSGLYQKDPLITLGLSLCLLSLGGLPPMLGFFGKIYLFFAGWANHQYLLVVVGLITSVISIYYYISVIKMMVVKEPQEASEIVKSYPEINWNIIGLPPLRIALYTCIAVTALGGILSNPLFKLANSAVSETPFLQNILAITNNVL.

The next 14 membrane-spanning stretches (helical) occupy residues 14-34, 42-62, 79-99, 108-128, 132-152, 167-187, 206-226, 240-260, 276-296, 302-322, 330-350, 374-394, 409-429, and 462-482; these read AIIP…VDLA, WAPV…ALQW, LAIA…LISW, PIGE…LLCG, LVSV…LSGY, LLVG…LYGL, FITS…IAAV, PTPV…AFAI, LLFT…ALAQ, MLAY…VSGT, VLYL…VILF, LGLS…GFFG, LLVV…ISVI, and IALY…NPLF.

Belongs to the complex I subunit 2 family. As to quaternary structure, NDH-1 can be composed of about 15 different subunits; different subcomplexes with different compositions have been identified which probably have different functions.

The protein resides in the cellular thylakoid membrane. It carries out the reaction a plastoquinone + NADH + (n+1) H(+)(in) = a plastoquinol + NAD(+) + n H(+)(out). The catalysed reaction is a plastoquinone + NADPH + (n+1) H(+)(in) = a plastoquinol + NADP(+) + n H(+)(out). NDH-1 shuttles electrons from an unknown electron donor, via FMN and iron-sulfur (Fe-S) centers, to quinones in the respiratory and/or the photosynthetic chain. The immediate electron acceptor for the enzyme in this species is believed to be plastoquinone. Couples the redox reaction to proton translocation, and thus conserves the redox energy in a proton gradient. Cyanobacterial NDH-1 also plays a role in inorganic carbon-concentration. The chain is NAD(P)H-quinone oxidoreductase subunit 2 from Prochlorococcus marinus subsp. pastoris (strain CCMP1986 / NIES-2087 / MED4).